Here is an 87-residue protein sequence, read N- to C-terminus: Small ribosomal subunit protein uS17 (87 aa).

This sequence belongs to the universal ribosomal protein uS17 family. Part of the 30S ribosomal subunit.

One of the primary rRNA binding proteins, it binds specifically to the 5'-end of 16S ribosomal RNA. In Bacillus cytotoxicus (strain DSM 22905 / CIP 110041 / 391-98 / NVH 391-98), this protein is Small ribosomal subunit protein uS17.